The following is a 152-amino-acid chain: Deoxyuridine 5'-triphosphate nucleotidohydrolase (152 aa).

Substrate contacts are provided by residues 71–73, N84, 88–90, and M98; these read RSG and LID.

It belongs to the dUTPase family. The cofactor is Mg(2+).

The enzyme catalyses dUTP + H2O = dUMP + diphosphate + H(+). It participates in pyrimidine metabolism; dUMP biosynthesis; dUMP from dCTP (dUTP route): step 2/2. This enzyme is involved in nucleotide metabolism: it produces dUMP, the immediate precursor of thymidine nucleotides and it decreases the intracellular concentration of dUTP so that uracil cannot be incorporated into DNA. This is Deoxyuridine 5'-triphosphate nucleotidohydrolase from Shewanella baltica (strain OS155 / ATCC BAA-1091).